A 308-amino-acid polypeptide reads, in one-letter code: Extended-spectrum beta-lactamase PER-1 (308 aa).

A signal peptide spans 1-26 (MNVIIKAVVTASTLLMVSFSSFETSA). Ser71 (nucleophile; acyl-ester intermediate) is an active-site residue. Positions 74, 135, and 171 each coordinate a beta-lactam.

The protein belongs to the class-A beta-lactamase family. Monomer.

It localises to the secreted. The catalysed reaction is a beta-lactam + H2O = a substituted beta-amino acid. Inhibited by the beta-lactamase-blocking agents clavulanic acid, tazobactam and sulbactam. Not inhibited by EDTA. Its function is as follows. Extended-spectrum beta-lactamase (ESBL) which confers resistance to penicillins, as well as first-, second- and third-generation cephalosporins, but not the carbapenem, imipenem, in the JM109 strain of E.coli. Has cefotaxime-hydrolyzing activity. This is Extended-spectrum beta-lactamase PER-1 from Pseudomonas aeruginosa.